Here is a 488-residue protein sequence, read N- to C-terminus: Probable glycine dehydrogenase (decarboxylating) subunit 2 (488 aa).

Position 274 is an N6-(pyridoxal phosphate)lysine (K274).

The protein belongs to the GcvP family. C-terminal subunit subfamily. As to quaternary structure, the glycine cleavage system is composed of four proteins: P, T, L and H. In this organism, the P 'protein' is a heterodimer of two subunits. Pyridoxal 5'-phosphate is required as a cofactor.

It carries out the reaction N(6)-[(R)-lipoyl]-L-lysyl-[glycine-cleavage complex H protein] + glycine + H(+) = N(6)-[(R)-S(8)-aminomethyldihydrolipoyl]-L-lysyl-[glycine-cleavage complex H protein] + CO2. Its function is as follows. The glycine cleavage system catalyzes the degradation of glycine. The P protein binds the alpha-amino group of glycine through its pyridoxal phosphate cofactor; CO(2) is released and the remaining methylamine moiety is then transferred to the lipoamide cofactor of the H protein. In Listeria monocytogenes serovar 1/2a (strain ATCC BAA-679 / EGD-e), this protein is Probable glycine dehydrogenase (decarboxylating) subunit 2.